The sequence spans 322 residues: tRNA-modifying protein YgfZ (322 aa).

Trp-182 is a folate binding site.

Belongs to the tRNA-modifying YgfZ family.

The protein localises to the cytoplasm. Functionally, folate-binding protein involved in regulating the level of ATP-DnaA and in the modification of some tRNAs. It is probably a key factor in regulatory networks that act via tRNA modification, such as initiation of chromosomal replication. In Vibrio campbellii (strain ATCC BAA-1116), this protein is tRNA-modifying protein YgfZ.